Consider the following 140-residue polypeptide: Fluoride-specific ion channel FluC 2 (140 aa).

4 helical membrane passes run 7–27, 45–65, 77–97, and 106–126; these read VPPL…LGAL, WATF…MVLV, PFAG…GLEI, and VLEA…GVVL. Positions 85 and 88 each coordinate Na(+).

Belongs to the fluoride channel Fluc/FEX (TC 1.A.43) family.

The protein localises to the cell membrane. The catalysed reaction is fluoride(in) = fluoride(out). With respect to regulation, na(+) is not transported, but it plays an essential structural role and its presence is essential for fluoride channel function. In terms of biological role, fluoride-specific ion channel. Important for reducing fluoride concentration in the cell, thus reducing its toxicity. This is Fluoride-specific ion channel FluC 2 from Nocardia farcinica (strain IFM 10152).